A 511-amino-acid polypeptide reads, in one-letter code: Fusicocca-1,10(14)-diene-8beta,16-diol C-9 hydroxylase (511 aa).

The chain crosses the membrane as a helical span at residues 7–29; it reads TVAALAAVFVAGTLLSRLASWIR. N-linked (GlcNAc...) asparagine glycosylation is found at Asn-64, Asn-163, and Asn-343. Cys-450 lines the heme pocket.

Belongs to the cytochrome P450 family. It depends on heme as a cofactor.

The protein localises to the membrane. It functions in the pathway mycotoxin biosynthesis. Functionally, cytochrome P450 monooxygenase; part of the 2 gene clusters that mediate the biosynthesis of fusicoccins, diterpene glucosides that display phytohormone-like activity and function as potent activators of plasma membrane H(+)-ATPases in plants by modifying 14-3-3 proteins and cause the plant disease constriction canker. The first step in the pathway is performed by the fusicoccadiene synthase PaFS that possesses both prenyl transferase and terpene cyclase activity, converting isopentenyl diphosphate and dimethylallyl diphosphate into geranylgeranyl diphosphate (GGDP) and successively converting GGDP into fusicocca-2,10(14)-diene, a precursor for fusicoccin H. The second step is the oxidation at the C-8 position by the cytochrome P450 monooxygenase PaP450-2 to yield fusicocca-2,10(14)-diene-8-beta-ol. The cytochrome P450 monooxygenase PaP450-1 then catalyzes the hydroxylation at the C-16 position to produce fusicocca-2,10(14)-diene-8-beta,16-diol. The dioxygenase fc-dox then catalyzes the 16-oxydation of fusicocca-2,10(14)-diene-8-beta,16-diol to yield an aldehyde (8-beta-hydroxyfusicocca-1,10(14)-dien-16-al). The short-chain dehydrogenase/reductase fc-sdr catalyzes the reduction of the aldehyde to yield fusicocca-1,10(14)-diene-8-beta,16-diol. The next step is the hydroxylation at C-9 performed by the cytochrome P450 monooxygenase PaP450-3 that leads to fusicoccin H aglycon which is glycosylated to fusicoccin H by the O-glycosyltransferase PaGT. Hydroxylation at C-12 by the cytochrome P450 monooxygenase PaP450-4 leads then to the production of fusicoccin Q and is followed by methylation by the O-methyltransferase PaMT to yield fusicoccin P. Fusicoccin P is further converted to fusicoccin J via prenylation by the O-glucose prenyltransferase PaPT. Cytochrome P450 monooxygenase PaP450-5 then performs hydroxylation at C-19 to yield dideacetyl-fusicoccin A which is acetylated to 3'-O-deacetyl-fusicoccin A by the O-acetyltransferase PaAT-2. Finally, a another acetylation by the O-acetyltransferase PaAT-1 yields fusicoccin A. The polypeptide is Fusicocca-1,10(14)-diene-8beta,16-diol C-9 hydroxylase (Phomopsis amygdali (Fusicoccum amygdali)).